The chain runs to 904 residues: Alpha-actinin-4 (904 aa).

The disordered stretch occupies residues Met1–Gln27. The actin-binding stretch occupies residues Met1–His259. Calponin-homology (CH) domains follow at residues Lys43–Ala147 and Thr156–Ser262. Spectrin repeat units lie at residues His286–Asn396, His406–Lys511, Glu521–Asp632, and Arg642–Asn745. 2 EF-hand domains span residues Glu758–Asp793 and Gln799–Asp834. Ca(2+) is bound by residues Asp771, Asp773, Glu782, Asp812, Asn814, Ser816, and Ser818.

Belongs to the alpha-actinin family. Homodimer; antiparallel. Component of the CART complex. May interact with nuclear receptors.

It is found in the nucleus. Its subcellular location is the cytoplasm. The protein resides in the cell junction. The protein localises to the perinuclear region. Functionally, F-actin cross-linking protein which is thought to anchor actin to a variety of intracellular structures. This is a bundling protein. Probably involved in vesicular trafficking via its association with the CART complex. Involved in tight junction assembly in epithelial cells. May also function as a transcriptional coactivator, stimulating transcription mediated by nuclear hormone receptors. In Gallus gallus (Chicken), this protein is Alpha-actinin-4.